Consider the following 658-residue polypeptide: Exoribonuclease 2 (658 aa).

The RNB domain occupies 189–530; the sequence is REDLTSLYFT…VNHRLIKQVL (342 aa). In terms of domain architecture, S1 motif spans 576–658; the sequence is AVEFDCEIAD…ETRSIVGNII (83 aa).

It belongs to the RNR ribonuclease family. RNase II subfamily.

Its subcellular location is the cytoplasm. The enzyme catalyses Exonucleolytic cleavage in the 3'- to 5'-direction to yield nucleoside 5'-phosphates.. Involved in mRNA degradation. Hydrolyzes single-stranded polyribonucleotides processively in the 3' to 5' direction. In Actinobacillus pleuropneumoniae serotype 7 (strain AP76), this protein is Exoribonuclease 2.